We begin with the raw amino-acid sequence, 513 residues long: Pleiotropic regulator 1 (513 aa).

Met1 is modified (N-acetylmethionine). The tract at residues 60–79 is disordered; that stretch reads TSKENLKEKGPQNATDSYPH. Ser119 carries the post-translational modification Phosphoserine. The tract at residues 136–160 is disordered; sequence VDANRTGPAGSEYRHPGASDRSQPT. Ser200 bears the Phosphoserine mark. WD repeat units follow at residues 201 to 240, 243 to 282, 285 to 324, 327 to 366, 369 to 409, 410 to 448, and 459 to 498; these read GHLG…LKLS, GHIS…VIRH, GHLS…SVHT, GHTN…TRVT, NHKK…QNLS, GHNA…NFQR, and DSES…TEET. A Phosphoserine modification is found at Ser390.

It belongs to the WD repeat PRL1/PRL2 family. Identified in the spliceosome C complex. Component of the PRP19-CDC5L splicing complex composed of a core complex comprising a homotetramer of PRPF19, CDC5L, PLRG1 and BCAS2, and at least three less stably associated proteins CTNNBL1, CWC15 and HSPA8. Interacts (via its WD40 repeat domain) directly with CDC5L (via its C-terminal); the interaction is required for mRNA splicing but not for spliceosome assembly. Component of the minor spliceosome, which splices U12-type introns. Within this complex, interacts with CRIPT. Also interacts directly in the complex with BCAS2 and PRPF19. Interacts with USB1.

The protein localises to the nucleus. The protein resides in the nucleus speckle. Involved in pre-mRNA splicing as component of the spliceosome. Component of the PRP19-CDC5L complex that forms an integral part of the spliceosome and is required for activating pre-mRNA splicing. As a component of the minor spliceosome, involved in the splicing of U12-type introns in pre-mRNAs. This Mus musculus (Mouse) protein is Pleiotropic regulator 1 (Plrg1).